The sequence spans 199 residues: Fe/S biogenesis protein NfuA (199 aa).

Residues cysteine 156 and cysteine 159 each coordinate [4Fe-4S] cluster.

This sequence belongs to the NfuA family. As to quaternary structure, homodimer. Requires [4Fe-4S] cluster as cofactor.

Involved in iron-sulfur cluster biogenesis. Binds a 4Fe-4S cluster, can transfer this cluster to apoproteins, and thereby intervenes in the maturation of Fe/S proteins. Could also act as a scaffold/chaperone for damaged Fe/S proteins. The polypeptide is Fe/S biogenesis protein NfuA (Haemophilus ducreyi (strain 35000HP / ATCC 700724)).